The chain runs to 114 residues: Probable 4-amino-4-deoxy-L-arabinose-phosphoundecaprenol flippase subunit ArnE (114 aa).

Residues 39–112 enclose the EamA domain; sequence RSPWLWLALF…VIGGVALLGQ (74 aa). The next 3 membrane-spanning stretches (helical) occupy residues 41 to 61, 64 to 84, and 91 to 111; these read PWLW…LLVL, LPVS…TLIA, and PVDV…ALLG.

It belongs to the ArnE family. In terms of assembly, heterodimer of ArnE and ArnF.

The protein resides in the cell inner membrane. Its pathway is bacterial outer membrane biogenesis; lipopolysaccharide biosynthesis. Functionally, translocates 4-amino-4-deoxy-L-arabinose-phosphoundecaprenol (alpha-L-Ara4N-phosphoundecaprenol) from the cytoplasmic to the periplasmic side of the inner membrane. This Pseudomonas fluorescens (strain Pf0-1) protein is Probable 4-amino-4-deoxy-L-arabinose-phosphoundecaprenol flippase subunit ArnE.